A 389-amino-acid polypeptide reads, in one-letter code: Probable serine/threonine-protein kinase PBL24 (389 aa).

Residues 1–36 form a disordered region; the sequence is MSCFLGPSTNNKSRENEGSSMAAPYEQQNLPRNDRR. The S-palmitoyl cysteine moiety is linked to residue Cys3. A Protein kinase domain is found at 71–348; sequence FRQEFLIGEG…SDVVTALSFM (278 aa). Residues 77-85 and Lys100 contribute to the ATP site; that span reads IGEGGFGRV. The active-site Proton acceptor is the Asp198. 2 positions are modified to phosphoserine: Ser202 and Ser232. Phosphothreonine is present on Thr238. Tyr246 carries the post-translational modification Phosphotyrosine.

It belongs to the protein kinase superfamily. Ser/Thr protein kinase family.

The protein localises to the cell membrane. The catalysed reaction is L-seryl-[protein] + ATP = O-phospho-L-seryl-[protein] + ADP + H(+). It carries out the reaction L-threonyl-[protein] + ATP = O-phospho-L-threonyl-[protein] + ADP + H(+). May be involved in plant defense signaling. The sequence is that of Probable serine/threonine-protein kinase PBL24 from Arabidopsis thaliana (Mouse-ear cress).